The primary structure comprises 423 residues: tRNA(Ile)-lysidine synthase (423 aa).

Residue 18–23 (SGGADS) participates in ATP binding.

Belongs to the tRNA(Ile)-lysidine synthase family.

The protein localises to the cytoplasm. The catalysed reaction is cytidine(34) in tRNA(Ile2) + L-lysine + ATP = lysidine(34) in tRNA(Ile2) + AMP + diphosphate + H(+). Ligates lysine onto the cytidine present at position 34 of the AUA codon-specific tRNA(Ile) that contains the anticodon CAU, in an ATP-dependent manner. Cytidine is converted to lysidine, thus changing the amino acid specificity of the tRNA from methionine to isoleucine. The chain is tRNA(Ile)-lysidine synthase from Aromatoleum aromaticum (strain DSM 19018 / LMG 30748 / EbN1) (Azoarcus sp. (strain EbN1)).